Here is a 221-residue protein sequence, read N- to C-terminus: Large ribosomal subunit protein uL4 (221 aa).

Residues 45 to 100 (ARQGTHKTKNRGEVSGAGRKPFKQKGTGRARQGSIRAPQMTGGGIVHGPTPRDYSQ) are disordered.

Belongs to the universal ribosomal protein uL4 family. Part of the 50S ribosomal subunit.

Its function is as follows. One of the primary rRNA binding proteins, this protein initially binds near the 5'-end of the 23S rRNA. It is important during the early stages of 50S assembly. It makes multiple contacts with different domains of the 23S rRNA in the assembled 50S subunit and ribosome. Forms part of the polypeptide exit tunnel. The chain is Large ribosomal subunit protein uL4 from Leifsonia xyli subsp. xyli (strain CTCB07).